The chain runs to 702 residues: Methionine--tRNA ligase (702 aa).

The short motif at 14 to 24 (PYANGPVHLGH) is the 'HIGH' region element. Positions 146, 149, 159, and 162 each coordinate Zn(2+). Positions 344-348 (KFSKS) match the 'KMSKS' region motif. Lysine 347 provides a ligand contact to ATP. One can recognise a tRNA-binding domain in the interval 601 to 702 (DFQKVDLRVA…GEKINGQSVQ (102 aa)).

Belongs to the class-I aminoacyl-tRNA synthetase family. MetG type 1 subfamily. In terms of assembly, homodimer. It depends on Zn(2+) as a cofactor.

Its subcellular location is the cytoplasm. The enzyme catalyses tRNA(Met) + L-methionine + ATP = L-methionyl-tRNA(Met) + AMP + diphosphate. Functionally, is required not only for elongation of protein synthesis but also for the initiation of all mRNA translation through initiator tRNA(fMet) aminoacylation. The protein is Methionine--tRNA ligase of Chlorobium luteolum (strain DSM 273 / BCRC 81028 / 2530) (Pelodictyon luteolum).